A 472-amino-acid chain; its full sequence is Methylenetetrahydrofolate--tRNA-(uracil-5-)-methyltransferase TrmFO (472 aa).

An FAD-binding site is contributed by Gly10–Gly15.

This sequence belongs to the MnmG family. TrmFO subfamily. The cofactor is FAD.

The protein localises to the cytoplasm. The enzyme catalyses uridine(54) in tRNA + (6R)-5,10-methylene-5,6,7,8-tetrahydrofolate + NADH + H(+) = 5-methyluridine(54) in tRNA + (6S)-5,6,7,8-tetrahydrofolate + NAD(+). It catalyses the reaction uridine(54) in tRNA + (6R)-5,10-methylene-5,6,7,8-tetrahydrofolate + NADPH + H(+) = 5-methyluridine(54) in tRNA + (6S)-5,6,7,8-tetrahydrofolate + NADP(+). Its function is as follows. Catalyzes the folate-dependent formation of 5-methyl-uridine at position 54 (M-5-U54) in all tRNAs. The chain is Methylenetetrahydrofolate--tRNA-(uracil-5-)-methyltransferase TrmFO from Mesorhizobium japonicum (strain LMG 29417 / CECT 9101 / MAFF 303099) (Mesorhizobium loti (strain MAFF 303099)).